The chain runs to 204 residues: Terpene cyclase ausL (204 aa).

A run of 5 helical transmembrane segments spans residues 19–39 (LSEMLKILAALGWSTNYLAMV), 49–69 (AIAVLPLCCDIAWEFTYAWIY), 75–95 (HWQGVVRVWFFLHTAVLAATL), 114–134 (LVLLYAAVIAAFAAGQLCLAL), and 138–158 (GALGFHWGGALCQFLSSSAAV).

It belongs to the paxB family.

It is found in the membrane. It functions in the pathway secondary metabolite biosynthesis; terpenoid biosynthesis. In terms of biological role, terpene cyclase; part of the gene cluster B that mediates the biosynthesis of austinol and dehydroaustinol, two fungal meroterpenoids. The first step of the pathway is the synthesis of 3,5-dimethylorsellinic acid by the polyketide synthase ausA. 3,5-dimethylorsellinic acid is then prenylated by the polyprenyl transferase ausN. Further epoxidation by the FAD-dependent monooxygenase ausM and cyclization by the probable terpene cyclase ausL lead to the formation of protoaustinoid A. Protoaustinoid A is then oxidized to spiro-lactone preaustinoid A3 by the combined action of the FAD-binding monooxygenases ausB and ausC, and the dioxygenase ausE. Acid-catalyzed keto-rearrangement and ring contraction of the tetraketide portion of preaustinoid A3 by ausJ lead to the formation of preaustinoid A4. The aldo-keto reductase ausK, with the help of ausH, is involved in the next step by transforming preaustinoid A4 into isoaustinone which is in turn hydroxylated by the P450 monooxygenase ausI to form austinolide. Finally, the cytochrome P450 monooxygenase ausG modifies austinolide to austinol. Austinol can be further modified to dehydroaustinol which forms a diffusible complex with diorcinol that initiates conidiation. Due to genetic rearrangements of the clusters and the subsequent loss of some enzymes, the end products of the Emericella nidulans austinoid biosynthesis clusters are austinol and dehydroaustinol, even if additional enzymes, such as the O-acetyltransferase ausQ and the cytochrome P450 monooxygenase ausR are still functional. The protein is Terpene cyclase ausL of Emericella nidulans (strain FGSC A4 / ATCC 38163 / CBS 112.46 / NRRL 194 / M139) (Aspergillus nidulans).